The primary structure comprises 275 residues: Large ribosomal subunit protein uL2 (275 aa).

2 disordered regions span residues 28–48 (KPYAPLLEKKSKSGGRNNNGR) and 223–275 (VVMN…RNKK).

The protein belongs to the universal ribosomal protein uL2 family. In terms of assembly, part of the 50S ribosomal subunit. Forms a bridge to the 30S subunit in the 70S ribosome.

One of the primary rRNA binding proteins. Required for association of the 30S and 50S subunits to form the 70S ribosome, for tRNA binding and peptide bond formation. It has been suggested to have peptidyltransferase activity; this is somewhat controversial. Makes several contacts with the 16S rRNA in the 70S ribosome. This chain is Large ribosomal subunit protein uL2, found in Photobacterium profundum (strain SS9).